The chain runs to 290 residues: 4-hydroxy-tetrahydrodipicolinate synthase (290 aa).

Threonine 45 contacts pyruvate. Tyrosine 133 acts as the Proton donor/acceptor in catalysis. Residue lysine 161 is the Schiff-base intermediate with substrate of the active site. A pyruvate-binding site is contributed by isoleucine 203.

It belongs to the DapA family. Homotetramer; dimer of dimers.

The protein resides in the cytoplasm. It carries out the reaction L-aspartate 4-semialdehyde + pyruvate = (2S,4S)-4-hydroxy-2,3,4,5-tetrahydrodipicolinate + H2O + H(+). It participates in amino-acid biosynthesis; L-lysine biosynthesis via DAP pathway; (S)-tetrahydrodipicolinate from L-aspartate: step 3/4. Catalyzes the condensation of (S)-aspartate-beta-semialdehyde [(S)-ASA] and pyruvate to 4-hydroxy-tetrahydrodipicolinate (HTPA). The protein is 4-hydroxy-tetrahydrodipicolinate synthase of Cellvibrio japonicus (strain Ueda107) (Pseudomonas fluorescens subsp. cellulosa).